Reading from the N-terminus, the 77-residue chain is Small ribosomal subunit protein uS17 (77 aa).

This sequence belongs to the universal ribosomal protein uS17 family. Part of the 30S ribosomal subunit.

One of the primary rRNA binding proteins, it binds specifically to the 5'-end of 16S ribosomal RNA. The protein is Small ribosomal subunit protein uS17 of Rickettsia conorii (strain ATCC VR-613 / Malish 7).